Here is a 247-residue protein sequence, read N- to C-terminus: 5'-nucleotidase SurE (247 aa).

Residues Asp8, Asp9, Ser39, and Asn91 each coordinate a divalent metal cation.

The protein belongs to the SurE nucleotidase family. A divalent metal cation is required as a cofactor.

The protein localises to the cytoplasm. It carries out the reaction a ribonucleoside 5'-phosphate + H2O = a ribonucleoside + phosphate. Functionally, nucleotidase that shows phosphatase activity on nucleoside 5'-monophosphates. The protein is 5'-nucleotidase SurE of Laribacter hongkongensis (strain HLHK9).